A 101-amino-acid chain; its full sequence is Small ribosomal subunit protein uS14 (101 aa).

Belongs to the universal ribosomal protein uS14 family. Part of the 30S ribosomal subunit. Contacts proteins S3 and S10.

Its function is as follows. Binds 16S rRNA, required for the assembly of 30S particles and may also be responsible for determining the conformation of the 16S rRNA at the A site. The protein is Small ribosomal subunit protein uS14 of Acinetobacter baumannii (strain SDF).